A 613-amino-acid polypeptide reads, in one-letter code: DNA mismatch repair protein MutL (613 aa).

Belongs to the DNA mismatch repair MutL/HexB family.

Its function is as follows. This protein is involved in the repair of mismatches in DNA. It is required for dam-dependent methyl-directed DNA mismatch repair. May act as a 'molecular matchmaker', a protein that promotes the formation of a stable complex between two or more DNA-binding proteins in an ATP-dependent manner without itself being part of a final effector complex. This Janthinobacterium sp. (strain Marseille) (Minibacterium massiliensis) protein is DNA mismatch repair protein MutL.